Here is a 120-residue protein sequence, read N- to C-terminus: Putative iron-sulfur cluster insertion protein ErpA (120 aa).

3 residues coordinate iron-sulfur cluster: cysteine 49, cysteine 113, and cysteine 115.

The protein belongs to the HesB/IscA family. Homodimer. The cofactor is iron-sulfur cluster.

In terms of biological role, required for insertion of 4Fe-4S clusters. This is Putative iron-sulfur cluster insertion protein ErpA from Albidiferax ferrireducens (strain ATCC BAA-621 / DSM 15236 / T118) (Rhodoferax ferrireducens).